Consider the following 90-residue polypeptide: UPF0235 protein CPn_0497/CP_0257/CPj0497/CpB0517 (90 aa).

The protein belongs to the UPF0235 family.

The sequence is that of UPF0235 protein CPn_0497/CP_0257/CPj0497/CpB0517 from Chlamydia pneumoniae (Chlamydophila pneumoniae).